We begin with the raw amino-acid sequence, 273 residues long: MKPFCVFLTFFLLLAASSKKVDSAETVSFNFNSFSEGNPAINFQGDVTVLSNGNIQLTNLNKVNSVGRVLYAMPVRIWSSATGNVASFLTSFSFEMKDIKDYDPADGIIFFIAPEDTQIPAGSIGGGTLGVSDTKGAGHFVGVEFDTYSNSEYNDPPTDHVGIDVNSVDSVKTVPWNSVSGAVVKVTVIYDSSTKTLSVAVTNDNGDITTIAQVVDLKAKLPERVKFGFSASGSLGGRQIHLIRSWSFTSTLITTTRRSIDNNEKKIMNMASA.

The N-terminal stretch at 1 to 23 (MKPFCVFLTFFLLLAASSKKVDS) is a signal peptide. Residues E144 and D146 each coordinate Mn(2+). Residues D146, Y148, N150, and D155 each coordinate Ca(2+). Residues D155 and H160 each coordinate Mn(2+).

The protein belongs to the leguminous lectin family. In terms of assembly, homotetramer.

Its function is as follows. D-galactose specific lectin. The protein is Galactose-binding lectin of Arachis hypogaea (Peanut).